A 41-amino-acid chain; its full sequence is Photosystem I reaction center subunit IX (41 aa).

The helical transmembrane segment at 7–27 threads the bilayer; it reads YLSTAPVITAIWLGITAGILI.

It belongs to the PsaJ family.

The protein localises to the cellular thylakoid membrane. Its function is as follows. May help in the organization of the PsaE and PsaF subunits. This chain is Photosystem I reaction center subunit IX, found in Cyanothece sp. (strain PCC 7425 / ATCC 29141).